We begin with the raw amino-acid sequence, 290 residues long: Isopentenyl-diphosphate Delta-isomerase II (290 aa).

The Nudix hydrolase domain occupies 108-260 (MLHRAFTVFL…GLKLSPWFRL (153 aa)). Active-site residues include Cys-145 and Glu-207.

The protein belongs to the IPP isomerase type 1 family.

The catalysed reaction is isopentenyl diphosphate = dimethylallyl diphosphate. The protein operates within isoprenoid biosynthesis; dimethylallyl diphosphate biosynthesis; dimethylallyl diphosphate from isopentenyl diphosphate: step 1/1. It functions in the pathway porphyrin-containing compound metabolism; chlorophyll biosynthesis. Functionally, catalyzes the 1,3-allylic rearrangement of the homoallylic substrate isopentenyl (IPP) to its highly electrophilic allylic isomer, dimethylallyl diphosphate (DMAPP). This Clarkia xantiana (Gunsight clarkia) protein is Isopentenyl-diphosphate Delta-isomerase II (IPI2).